A 416-amino-acid polypeptide reads, in one-letter code: Transcription factor PIL1 (416 aa).

Disordered regions lie at residues 1–24, 89–113, and 197–231; these read MEAKPLASSSSEPNMISPSSNIKP, VSQSKPQQDKETNEQMNNNKKKLKS, and ESTYLSNNSDDESDDAKTQVHARTRKPVTKRKRST. A compositionally biased stretch (low complexity) spans 8–22; that stretch reads SSSSEPNMISPSSNI. A coiled-coil region spans residues 95-124; sequence QQDKETNEQMNNNKKKLKSSKIEFERNVSK. A compositionally biased stretch (basic residues) spans 216 to 229; the sequence is VHARTRKPVTKRKR. Positions 229–278 constitute a bHLH domain; the sequence is RSTEVHKLYERKRRDEFNKKMRALQDLLPNCYKDDKASLLDEAIKYMRTL.

As to quaternary structure, homodimer. Interacts with APRR1/TOC1. Associates to PTAC12/HMR/PAP5 which acts as a transcriptional coactivator. In terms of tissue distribution, mainly expressed in stems, fruits and flowers and, to a lower extent, in leaves, seedlings and roots. Accumulates in etiolated seedlings.

It localises to the nucleus. Functionally, transcription factor. Involved in responses to transient and long-term shade. Required for the light-mediated inhibition of hypocotyl elongation. Necessary for rapid light-induced expression of the photomorphogenesis- and circadian-related gene APRR9. Seems to play a role in multiple PHYB responses, such as flowering transition and petiole elongation. The polypeptide is Transcription factor PIL1 (Arabidopsis thaliana (Mouse-ear cress)).